A 662-amino-acid polypeptide reads, in one-letter code: Probable protein phosphatase CG10417 (662 aa).

The PPM-type phosphatase domain occupies 23 to 564 (AVGASSMQGW…DNMTAVIVQF (542 aa)). 2 residues coordinate Mn(2+): Asp57 and Gly58. 2 disordered regions span residues 219 to 275 (DGVA…FKHT) and 288 to 374 (GSND…DEDQ). Composition is skewed to polar residues over residues 238 to 252 (DSNT…STKN), 261 to 275 (NDQN…FKHT), and 288 to 319 (GSND…INSS). Phosphoserine is present on residues Ser289 and Ser306. Residues 320-334 (QDDEFTDDDADYEEN) show a composition bias toward acidic residues. Residues 337–347 (VKSPDTSSAES) show a composition bias toward polar residues. Positions 349 to 374 (DCTENDDDGDEDGNEDSDEEETDEDQ) are enriched in acidic residues. Mn(2+) is bound by residues Asp506 and Asp555. Over residues 591–609 (VSHSLNDQSASKRCASQNA) the composition is skewed to polar residues. The disordered stretch occupies residues 591 to 662 (VSHSLNDQSA…KEVTIIVSSS (72 aa)). 3 positions are modified to phosphoserine: Ser592, Ser594, and Ser599. The segment covering 616-637 (LEKNNSKRLKTDLEQENIKDRT) has biased composition (basic and acidic residues). Phosphothreonine is present on Thr637. 2 positions are modified to phosphoserine: Ser639 and Ser641.

This sequence belongs to the PP2C family. Mg(2+) is required as a cofactor. Requires Mn(2+) as cofactor.

The enzyme catalyses O-phospho-L-seryl-[protein] + H2O = L-seryl-[protein] + phosphate. It catalyses the reaction O-phospho-L-threonyl-[protein] + H2O = L-threonyl-[protein] + phosphate. The polypeptide is Probable protein phosphatase CG10417 (Drosophila melanogaster (Fruit fly)).